A 201-amino-acid polypeptide reads, in one-letter code: Superoxide dismutase [Mn] (201 aa).

Mn(2+) contacts are provided by His27, His81, Asp163, and His167.

It belongs to the iron/manganese superoxide dismutase family. Homodimer. The cofactor is Mn(2+).

The protein localises to the secreted. It catalyses the reaction 2 superoxide + 2 H(+) = H2O2 + O2. Destroys superoxide anion radicals which are normally produced within the cells and which are toxic to biological systems. The chain is Superoxide dismutase [Mn] (sodA) from Streptococcus pyogenes serotype M18 (strain MGAS8232).